Here is an 824-residue protein sequence, read N- to C-terminus: Mucosa-associated lymphoid tissue lymphoma translocation protein 1 (824 aa).

Positions 1–27 (MSLLGDPLQALPPSAAPTGPLLAPPAG) are disordered. Position 2 is an N-acetylserine (Ser2). A compositionally biased stretch (low complexity) spans 11–27 (LPPSAAPTGPLLAPPAG). The region spanning 39 to 126 (RRLSELLDQA…EVLQLLSPPG (88 aa)) is the Death domain. 2 consecutive Ig-like C2-type domains span residues 125-201 (PGIK…FEFS) and 212-305 (PESF…KKVE). Residue Ser135 is modified to Phosphoserine. Cystine bridges form between Cys147–Cys190 and Cys248–Cys290. The interval 348–562 (IGNMNYREHP…SLSEKRALTD (215 aa)) is caspase-like. The short motif at 369–376 (LTNLLRQL) is the Nuclear export signal element. Residues His415 and Cys464 contribute to the active site.

Belongs to the peptidase C14B family. As to quaternary structure, homooligomer; forms oligomers which bind to TRAF6. Forms a complex with CARD14 and MALT1; resulting in the formation of a CBM (CARD14-BCL10-MALT1) complex. Forms a complex with CARD11 and MALT1; resulting in the formation of a CBM (CARD11-BCL10-MALT1) complex. Forms a complex with CARD9 and MALT1; resulting in the formation of a CBM (CARD9-BCL10-MALT1) complex. In terms of tissue distribution, highly expressed in peripheral blood mononuclear cells. Detected at lower levels in bone marrow, thymus and lymph node, and at very low levels in colon and lung.

The protein resides in the cytoplasm. Its subcellular location is the perinuclear region. It is found in the nucleus. In terms of biological role, protease that enhances BCL10-induced activation: acts via formation of CBM complexes that channel adaptive and innate immune signaling downstream of CARD domain-containing proteins (CARD9, CARD11 and CARD14) to activate NF-kappa-B and MAP kinase p38 pathways which stimulate expression of genes encoding pro-inflammatory cytokines and chemokines. Mediates BCL10 cleavage: MALT1-dependent BCL10 cleavage plays an important role in T-cell antigen receptor-induced integrin adhesion. Involved in the induction of T helper 17 cells (Th17) differentiation. Cleaves RC3H1 and ZC3H12A in response to T-cell receptor (TCR) stimulation which releases their cooperatively repressed targets to promote Th17 cell differentiation. Also mediates cleavage of N4BP1 in T-cells following TCR-mediated activation, leading to N4BP1 inactivation. May also have ubiquitin ligase activity: binds to TRAF6, inducing TRAF6 oligomerization and activation of its ligase activity. This chain is Mucosa-associated lymphoid tissue lymphoma translocation protein 1, found in Homo sapiens (Human).